The primary structure comprises 372 residues: Hydrogenase-1 small chain (372 aa).

The tat-type signal signal peptide spans 1–45; that stretch reads MNNEETFYQAMRRQGVTRRSFLKYCSLAATSLGLGAGMAPKIAWA. At 46-325 the chain is on the periplasmic side; the sequence is LENKPRIPVV…PQMGTHSTAD (280 aa). [4Fe-4S] cluster-binding residues include cysteine 62, cysteine 65, cysteine 160, cysteine 194, histidine 232, cysteine 235, cysteine 260, and cysteine 266. The [3Fe-4S] cluster site is built by cysteine 275, cysteine 294, and cysteine 297. Residues 326-346 traverse the membrane as a helical segment; sequence TVGLTALGVVAAAVGVHAVAS. Residues 346 to 372 form a disordered region; sequence SSVDQRRRHNQQPTETEHQPGNEDKQA. Over 347 to 372 the chain is Cytoplasmic; sequence SVDQRRRHNQQPTETEHQPGNEDKQA. Positions 360-372 are enriched in basic and acidic residues; sequence ETEHQPGNEDKQA.

This sequence belongs to the [NiFe]/[NiFeSe] hydrogenase small subunit family. As to quaternary structure, heterodimer of a large and a small subunit. [4Fe-4S] cluster serves as cofactor. Requires [3Fe-4S] cluster as cofactor. Post-translationally, predicted to be exported by the Tat system. The position of the signal peptide cleavage has not been experimentally proven.

The protein localises to the cell inner membrane. It catalyses the reaction H2 + A = AH2. Functionally, this is one of three S.flexneri hydrogenases synthesized in response to different physiological conditions. HYD1 is believed to have a role in hydrogen cycling during fermentative growth. The sequence is that of Hydrogenase-1 small chain (hyaA) from Shigella flexneri.